The chain runs to 215 residues: Orotate phosphoribosyltransferase (215 aa).

Lys26 is a binding site for 5-phospho-alpha-D-ribose 1-diphosphate. Residue 34 to 35 (FF) coordinates orotate. 5-phospho-alpha-D-ribose 1-diphosphate is bound by residues 72 to 73 (YK), Arg99, Lys100, Lys103, His105, and 124 to 132 (DDVITAGTA). Orotate is bound by residues Thr128 and Arg156.

Belongs to the purine/pyrimidine phosphoribosyltransferase family. PyrE subfamily. Homodimer. It depends on Mg(2+) as a cofactor.

It carries out the reaction orotidine 5'-phosphate + diphosphate = orotate + 5-phospho-alpha-D-ribose 1-diphosphate. It participates in pyrimidine metabolism; UMP biosynthesis via de novo pathway; UMP from orotate: step 1/2. Functionally, catalyzes the transfer of a ribosyl phosphate group from 5-phosphoribose 1-diphosphate to orotate, leading to the formation of orotidine monophosphate (OMP). The protein is Orotate phosphoribosyltransferase of Shewanella oneidensis (strain ATCC 700550 / JCM 31522 / CIP 106686 / LMG 19005 / NCIMB 14063 / MR-1).